We begin with the raw amino-acid sequence, 237 residues long: Ribosomal RNA small subunit methyltransferase G (237 aa).

S-adenosyl-L-methionine-binding positions include Gly78, Phe83, 129 to 130, and Arg148; that span reads AE.

This sequence belongs to the methyltransferase superfamily. RNA methyltransferase RsmG family.

It localises to the cytoplasm. Specifically methylates the N7 position of a guanine in 16S rRNA. This Streptococcus equi subsp. equi (strain 4047) protein is Ribosomal RNA small subunit methyltransferase G.